We begin with the raw amino-acid sequence, 86 residues long: Small ribosomal subunit protein bS18 (86 aa).

This sequence belongs to the bacterial ribosomal protein bS18 family. In terms of assembly, part of the 30S ribosomal subunit. Forms a tight heterodimer with protein bS6.

Binds as a heterodimer with protein bS6 to the central domain of the 16S rRNA, where it helps stabilize the platform of the 30S subunit. The chain is Small ribosomal subunit protein bS18 from Campylobacter concisus (strain 13826).